A 202-amino-acid chain; its full sequence is Ras-related protein Rab-1A (202 aa).

Residues 15–23 (GDSGVGKSC), 33–40 (YSESFIST), 63–67 (DTAGQ), 121–124 (NKSD), and 151–153 (SAK) contribute to the GTP site. Positions 37 to 45 (FISTIGVDF) match the Effector region motif. The segment at 180 to 202 (QTVDKNKVVPGSSAPISPKSGCC) is disordered. S-geranylgeranyl cysteine attachment occurs at residues cysteine 201 and cysteine 202.

Belongs to the small GTPase superfamily. Rab family.

The protein resides in the cell membrane. The protein is Ras-related protein Rab-1A (rab1A) of Dictyostelium discoideum (Social amoeba).